A 709-amino-acid chain; its full sequence is UvrABC system protein B (709 aa).

Residues 35–416 enclose the Helicase ATP-binding domain; it reads ERVEAGEKDV…YELGQADGYV (382 aa). An ATP-binding site is contributed by 48–55; that stretch reads GATGTGKS. The Beta-hairpin signature appears at 101 to 124; the sequence is YYDYYQPEAYVPQTDTFIEKDSSI. One can recognise a Helicase C-terminal domain in the interval 438-604; sequence QIDDLLEQIR…PLRKRIADIT (167 aa). Residues 666–701 form the UVR domain; the sequence is ADLIEQMSQQMHQAAADLQFELAARLRDEVGELKKE.

This sequence belongs to the UvrB family. As to quaternary structure, forms a heterotetramer with UvrA during the search for lesions. Interacts with UvrC in an incision complex.

Its subcellular location is the cytoplasm. In terms of biological role, the UvrABC repair system catalyzes the recognition and processing of DNA lesions. A damage recognition complex composed of 2 UvrA and 2 UvrB subunits scans DNA for abnormalities. Upon binding of the UvrA(2)B(2) complex to a putative damaged site, the DNA wraps around one UvrB monomer. DNA wrap is dependent on ATP binding by UvrB and probably causes local melting of the DNA helix, facilitating insertion of UvrB beta-hairpin between the DNA strands. Then UvrB probes one DNA strand for the presence of a lesion. If a lesion is found the UvrA subunits dissociate and the UvrB-DNA preincision complex is formed. This complex is subsequently bound by UvrC and the second UvrB is released. If no lesion is found, the DNA wraps around the other UvrB subunit that will check the other stand for damage. In Micrococcus luteus (strain ATCC 4698 / DSM 20030 / JCM 1464 / CCM 169 / CCUG 5858 / IAM 1056 / NBRC 3333 / NCIMB 9278 / NCTC 2665 / VKM Ac-2230) (Micrococcus lysodeikticus), this protein is UvrABC system protein B.